Consider the following 470-residue polypeptide: MSKKYDAGVKEYRDTYWTPDYVPLDTDLLACFKCTGQEGVPREEVAAAVAAESSTGTWSTVWSELLTDLEFYKGRCYRIEDVPGDKESFYAFIAYPLDLFEEGSITNVLTSLVGNVFGFKALRHLRLEDIRFPMAFIKTCGGPPQGIVVERDRLNKYGRPLLGCTIKPKLGLSGKNYGRVVYECLRGGLDLTKDDENINSQPFQRWRDRFEFVAEAVKLAQQETGEVKGHYLNCTATTPEEMYERAEFAKELDMPIIMHDYITGGFTANTGLANWCRKNGMLLHIHRAMHAVIDRHPKHGIHFRVLAKCLRLSGGDQLHTGTVVGKLEGDRQTTLGYIDNLRESFVPEDRTRGNFFDQDWGSMPGVFAVASGGIHVWHMPALLAIFGDDSCLQFGGGTHGHPWGSAAGAAANRVALEACVKARNAGREIEKESRDILMEAAKHSPELAIALETWKEIKFEFDTVDKLDVQ.

Residues asparagine 115 and threonine 165 each coordinate substrate. The active-site Proton acceptor is lysine 167. Lysine 169 provides a ligand contact to substrate. Positions 193, 195, and 196 each coordinate Mg(2+). An N6-carboxylysine modification is found at lysine 193. The active-site Proton acceptor is the histidine 286. The substrate site is built by arginine 287, histidine 319, and serine 371.

Belongs to the RuBisCO large chain family. Type I subfamily. As to quaternary structure, heterohexadecamer of 8 large chains and 8 small chains. Mg(2+) serves as cofactor.

The protein localises to the carboxysome. It catalyses the reaction 2 (2R)-3-phosphoglycerate + 2 H(+) = D-ribulose 1,5-bisphosphate + CO2 + H2O. It carries out the reaction D-ribulose 1,5-bisphosphate + O2 = 2-phosphoglycolate + (2R)-3-phosphoglycerate + 2 H(+). RuBisCO catalyzes two reactions: the carboxylation of D-ribulose 1,5-bisphosphate, the primary event in carbon dioxide fixation, as well as the oxidative fragmentation of the pentose substrate in the photorespiration process. Both reactions occur simultaneously and in competition at the same active site. The protein is Ribulose bisphosphate carboxylase large chain of Prochlorococcus marinus (strain SARG / CCMP1375 / SS120).